We begin with the raw amino-acid sequence, 348 residues long: MGMSDVYLRSRTAMERLASSDTFPVIARSSACRSLFGPVDHEELGRELRMRLAELNAEDQNRWDFNFQQDVPLRGPGRLQWMEVDSESVPAFYRETVQVGRCRLQLGPRPPPVAVAVIPRSGPPAGEAPDGLEEAPEQPPSAPASAVVAEPTPPATPAPASDLTSDPIPEVTLVATSDPTPDPIPDANPDVATRDGEEQVPEQVSEQGEESGAEPGDELGTEPVSEQGEEQGAEPVEEKDEEPEEEQGAEPVEEQGAEPVEEQNGEPVEEQDENQEQRGQELKDQPLSGIPGRPAPGTAAANANDFFAKRKRTAQENKASNDVPPGCPSPNVAPGVGAVEQTPRKRLR.

Arg109 bears the Omega-N-methylarginine mark. Residues 115–348 form a disordered region; that stretch reads VAVIPRSGPP…VEQTPRKRLR (234 aa). Acidic residues-rich tracts occupy residues 207-220 and 227-274; these read QGEE…DELG and QGEE…QDEN. Basic and acidic residues predominate over residues 275–284; it reads QEQRGQELKD. The Nuclear localization signal signature appears at 309-312; the sequence is KRKR.

This sequence belongs to the CDI family. Interacts with PCNA. In terms of tissue distribution, expressed in the heart, brain, lung, skeletal muscle, kidney, pancreas and testis. High levels are seen in the placenta while low levels are seen in the liver.

Its subcellular location is the nucleus. Functionally, potent tight-binding inhibitor of several G1 cyclin/CDK complexes (cyclin E-CDK2, cyclin D2-CDK4, and cyclin A-CDK2) and, to lesser extent, of the mitotic cyclin B-CDC2. Negative regulator of cell proliferation. May play a role in maintenance of the non-proliferative state throughout life. The protein is Cyclin-dependent kinase inhibitor 1C (Cdkn1c) of Mus musculus (Mouse).